A 194-amino-acid chain; its full sequence is MQESHFFAHLARMKLIQRWPLMRSVSSENVSEHSLQVAFVAHALALIKNKKFGGHINAERVAVLAMYHDSSEVLTGDLPTPVKYYNPEIAKEYKKIEAAAEQKLLSMLPEEFQEDFRPFVISQQTSEEEAQIVKQADSICAYLKCLEELSAGNHEFALAKKRLDITLAERKTPEMDYFLNTFAPSFELSLDEIS.

Residues 18 to 19 (RW) and histidine 33 contribute to the substrate site. The 113-residue stretch at 30-142 (VSEHSLQVAF…VKQADSICAY (113 aa)) folds into the HD domain. A divalent metal cation contacts are provided by histidine 33, histidine 68, and aspartate 69. Residues aspartate 69, 77 to 80 (DLPT), and aspartate 137 each bind substrate. Aspartate 137 contacts a divalent metal cation.

It belongs to the 5DNU family. As to quaternary structure, homodimer. A divalent metal cation is required as a cofactor.

Its subcellular location is the cytoplasm. It carries out the reaction a 2'-deoxyribonucleoside 5'-phosphate + H2O = a 2'-deoxyribonucleoside + phosphate. Catalyzes the strictly specific dephosphorylation of 2'-deoxyribonucleoside 5'-monophosphates. This is 5'-deoxynucleotidase VV1113 from Vibrio vulnificus (strain YJ016).